Reading from the N-terminus, the 121-residue chain is Amelogenin (121 aa).

Residues 1–121 are disordered; that stretch reads LHHQIIPVLS…DLPLEPWPAS (121 aa). Polar residues-rich tracts occupy residues 10–19 and 47–59; these read SQHQTPTHAL and HSVT…QSNL. Positions 60–84 are enriched in low complexity; sequence PQPGQQPFQPQFPQKPTHRPIQPQA. A compositionally biased stretch (pro residues) spans 85–121; it reads PVHPMPPMPQPQLPPMFPLQPLPPLLPDLPLEPWPAS.

It belongs to the amelogenin family.

It is found in the secreted. The protein resides in the extracellular space. It localises to the extracellular matrix. Its function is as follows. Plays a role in the biomineralization of teeth. Seems to regulate the formation of crystallites during the secretory stage of tooth enamel development. Thought to play a major role in the structural organization and mineralization of developing enamel. The polypeptide is Amelogenin (AMEL) (Tachyglossus aculeatus aculeatus (Southeast Australian short-beaked echidna)).